The sequence spans 670 residues: Auxin response factor 16 (670 aa).

The segment at residues Phe-120–Lys-222 is a DNA-binding region (TF-B3). The span at Lys-545–Gly-557 shows a compositional bias: polar residues. The interval Lys-545–Ala-579 is disordered. In terms of domain architecture, PB1 spans Thr-584–Gly-664.

Belongs to the ARF family. Homodimers and heterodimers.

It localises to the nucleus. Auxin response factors (ARFs) are transcriptional factors that bind specifically to the DNA sequence 5'-TGTCTC-3' found in the auxin-responsive promoter elements (AuxREs). Could act as transcriptional activator or repressor. Formation of heterodimers with Aux/IAA proteins may alter their ability to modulate early auxin response genes expression. The chain is Auxin response factor 16 (ARF16) from Arabidopsis thaliana (Mouse-ear cress).